The sequence spans 343 residues: Tetraacyldisaccharide 4'-kinase (343 aa).

53-60 (TCGGAGKT) contacts ATP.

This sequence belongs to the LpxK family.

It carries out the reaction a lipid A disaccharide + ATP = a lipid IVA + ADP + H(+). Its pathway is glycolipid biosynthesis; lipid IV(A) biosynthesis; lipid IV(A) from (3R)-3-hydroxytetradecanoyl-[acyl-carrier-protein] and UDP-N-acetyl-alpha-D-glucosamine: step 6/6. Transfers the gamma-phosphate of ATP to the 4'-position of a tetraacyldisaccharide 1-phosphate intermediate (termed DS-1-P) to form tetraacyldisaccharide 1,4'-bis-phosphate (lipid IVA). In Bartonella quintana (strain Toulouse) (Rochalimaea quintana), this protein is Tetraacyldisaccharide 4'-kinase.